The sequence spans 1149 residues: ATP-dependent helicase/deoxyribonuclease subunit B (1149 aa).

One can recognise a UvrD-like helicase ATP-binding domain in the interval 1 to 276 (MAIRYIFGRA…INLDIEERKV (276 aa)). Residue 8 to 15 (GRAGRGKS) coordinates ATP. Residues 273–586 (ERKVLPKEKE…LVGSIERSKS (314 aa)) enclose the UvrD-like helicase C-terminal domain. Residues Cys786, Cys1105, Cys1108, and Cys1114 each coordinate [4Fe-4S] cluster.

The protein belongs to the helicase family. AddB/RexB type 1 subfamily. In terms of assembly, heterodimer of AddA and AddB. Mg(2+) serves as cofactor. It depends on [4Fe-4S] cluster as a cofactor.

Its function is as follows. The heterodimer acts as both an ATP-dependent DNA helicase and an ATP-dependent, dual-direction single-stranded exonuclease. Recognizes the chi site generating a DNA molecule suitable for the initiation of homologous recombination. The AddB subunit has 5' -&gt; 3' nuclease activity but not helicase activity. The protein is ATP-dependent helicase/deoxyribonuclease subunit B of Alkaliphilus metalliredigens (strain QYMF).